A 296-amino-acid chain; its full sequence is Uricase (296 aa).

Catalysis depends on charge relay system residues Lys14 and Thr61. Urate contacts are provided by Thr61, Asp62, Phe163, Arg180, Val229, Gln230, and Asn256. The Charge relay system role is filled by His258.

It belongs to the uricase family.

Its subcellular location is the peroxisome. The protein localises to the cytoplasm. The protein resides in the nucleus. It catalyses the reaction urate + O2 + H2O = 5-hydroxyisourate + H2O2. The protein operates within purine metabolism; urate degradation; (S)-allantoin from urate: step 1/3. In terms of biological role, catalyzes the oxidation of uric acid to 5-hydroxyisourate, which is further processed to form (S)-allantoin. In Schizosaccharomyces pombe (strain 972 / ATCC 24843) (Fission yeast), this protein is Uricase.